Here is a 1203-residue protein sequence, read N- to C-terminus: DNA-directed RNA polymerase subunit beta (1203 aa).

The segment covering 1174–1195 (AAQEAKAAFEAEEAEKATKAEA) has biased composition (basic and acidic residues). The disordered stretch occupies residues 1174-1203 (AAQEAKAAFEAEEAEKATKAEATEEAAEQE).

Belongs to the RNA polymerase beta chain family. In terms of assembly, the RNAP catalytic core consists of 2 alpha, 1 beta, 1 beta' and 1 omega subunit. When a sigma factor is associated with the core the holoenzyme is formed, which can initiate transcription.

The catalysed reaction is RNA(n) + a ribonucleoside 5'-triphosphate = RNA(n+1) + diphosphate. DNA-dependent RNA polymerase catalyzes the transcription of DNA into RNA using the four ribonucleoside triphosphates as substrates. The sequence is that of DNA-directed RNA polymerase subunit beta from Streptococcus pneumoniae (strain JJA).